The primary structure comprises 209 residues: MSEELSADTSYTEDDFYCPVCQEVLKTPVRTAACQHVFCRKCFLTAMRESGIHCPLCRGSVTRRERACPERAIDLENIMRRVSGSCRCCSKKIKFYRMRHHYKSCKKYQDEYGVSSVIPNVKISQDSVRSSNRSETSASDNTETYQEDTSSSGHPTFKCPLCQESNFTRQRLLDHCNSNHLFQIVPVNLQLDEETQYQTAVEESFQVNM.

The RING-type zinc finger occupies 18-58 (CPVCQEVLKTPVRTAACQHVFCRKCFLTAMRESGIHCPLCR). The Zn(2+) site is built by C86, C89, H101, and C105. The C2HC RNF-type zinc finger occupies 86-105 (CRCCSKKIKFYRMRHHYKSC). The disordered stretch occupies residues 125–154 (QDSVRSSNRSETSASDNTETYQEDTSSSGH). T142 carries the post-translational modification Phosphothreonine. The C2H2-type zinc-finger motif lies at 157–180 (FKCPLCQESNFTRQRLLDHCNSNH). The 19-residue stretch at 189–207 (LQLDEETQYQTAVEESFQV) folds into the UIM domain.

As to quaternary structure, interacts with NLK. Interacts with XRCC5/Ku80. Interacts with RBBP8/CtIP. Post-translationally, auto-ubiquitinated.

It is found in the chromosome. It catalyses the reaction S-ubiquitinyl-[E2 ubiquitin-conjugating enzyme]-L-cysteine + [acceptor protein]-L-lysine = [E2 ubiquitin-conjugating enzyme]-L-cysteine + N(6)-ubiquitinyl-[acceptor protein]-L-lysine.. The protein operates within protein modification; protein ubiquitination. In terms of biological role, E3 ubiquitin-protein ligase involved in DNA damage response by promoting DNA resection and homologous recombination. Recruited to sites of double-strand breaks following DNA damage and specifically promotes double-strand break repair via homologous recombination. Two different, non-exclusive, mechanisms have been proposed. According to a report, regulates the choice of double-strand break repair by favoring homologous recombination over non-homologous end joining (NHEJ): acts by mediating ubiquitination of XRCC5/Ku80, leading to remove the Ku complex from DNA breaks, thereby promoting homologous recombination. According to another report, cooperates with UBE2Ds E2 ubiquitin ligases (UBE2D1, UBE2D2, UBE2D3 or UBE2D4) to promote homologous recombination by mediating ubiquitination of RBBP8/CtIP. Together with NLK, involved in the ubiquitination and degradation of TCF/LEF. Also exhibits auto-ubiquitination activity in combination with UBE2K. May act as a negative regulator in the Wnt/beta-catenin-mediated signaling pathway. The polypeptide is E3 ubiquitin-protein ligase RNF138 (Rattus norvegicus (Rat)).